The following is a 341-amino-acid chain: Putative MAGE domain-containing protein MAGEA13P (341 aa).

Disordered stretches follow at residues Met1–Glu21 and Lys78–Gln101. Basic and acidic residues predominate over residues Glu87–Pro97. In terms of domain architecture, MAGE spans Leu105 to Ala304.

This chain is Putative MAGE domain-containing protein MAGEA13P (MAGEA13P), found in Homo sapiens (Human).